The chain runs to 132 residues: Probable prefoldin subunit 4 (132 aa).

It belongs to the prefoldin subunit beta family. As to quaternary structure, heterohexamer of two PFD-alpha type and four PFD-beta type subunits.

Functionally, binds specifically to cytosolic chaperonin (c-CPN) and transfers target proteins to it. Binds to nascent polypeptide chain and promotes folding in an environment in which there are many competing pathways for nonnative proteins. This is Probable prefoldin subunit 4 (pfdn4) from Dictyostelium discoideum (Social amoeba).